Consider the following 299-residue polypeptide: Non-homologous end-joining factor 1 (299 aa).

The segment at 1 to 135 (MEELEQGLLM…ASPSLVSQHL (135 aa)) is globular head. Residues 128-170 (PSLVSQHLIRPLMGMSLALQCQVRELATLLHMKDLEIQDYQES) adopt a coiled-coil conformation. Phosphoserine; by PRKDC occurs at positions 132, 203, 245, and 251. The segment at 224–288 (QEVQVGQKHQ…GPLQRPQLSK (65 aa)) is C-terminal tail. Residues 255–266 (NQPEQLVSSAPT) are compositionally biased toward polar residues. A disordered region spans residues 255–299 (NQPEQLVSSAPTLSAPEKESTGTSGPLQRPQLSKVKRKKPRGLFS). Ser-263 is modified (phosphoserine). Position 266 is a phosphothreonine (Thr-266). Ser-287 bears the Phosphoserine mark. Over residues 288 to 299 (KVKRKKPRGLFS) the composition is skewed to basic residues. The XLM motif lies at 289–299 (VKRKKPRGLFS).

It belongs to the XRCC4-XLF family. XLF subfamily. Homodimer; mainly exists as a homodimer when not associated with XRCC4. Interacts with XRCC4; the interaction is direct and is mediated via a head-to-head interaction between N-terminal head regions. Component of the core long-range non-homologous end joining (NHEJ) complex (also named DNA-PK complex) composed of PRKDC, LIG4, XRCC4, XRCC6/Ku70, XRCC5/Ku86 and NHEJ1/XLF. Additional component of the NHEJ complex includes PAXX. Following autophosphorylation, PRKDC dissociates from DNA, leading to formation of the short-range NHEJ complex, composed of LIG4, XRCC4, XRCC6/Ku70, XRCC5/Ku86 and NHEJ1/XLF. Interacts with POLL (DNA polymerase lambda); promoting POLL recruitment to double-strand breaks (DSBs) and stimulation of the end-filling activity of POLL. Post-translationally, phosphorylated by PRKDC at the C-terminus in response to DNA damage. Phosphorylations by PRKDC at the C-terminus of XRCC4 and NHEJ1/XLF are highly redundant and regulate ability of the XRCC4-NHEJ1/XLF subcomplex to bridge DNA. Phosphorylation does not prevent interaction with XRCC4 but disrupts ability to bridge DNA and promotes detachment from DNA. As to expression, ubiquitously expressed.

The protein resides in the nucleus. The protein localises to the chromosome. Its function is as follows. DNA repair protein involved in DNA non-homologous end joining (NHEJ); it is required for double-strand break (DSB) repair and V(D)J recombination and is also involved in telomere maintenance. Plays a key role in NHEJ by promoting the ligation of various mismatched and non-cohesive ends. Together with PAXX, collaborates with DNA polymerase lambda (POLL) to promote joining of non-cohesive DNA ends. May act in concert with XRCC5-XRCC6 (Ku) to stimulate XRCC4-mediated joining of blunt ends and several types of mismatched ends that are non-complementary or partially complementary. In some studies, has been shown to associate with XRCC4 to form alternating helical filaments that bridge DNA and act like a bandage, holding together the broken DNA until it is repaired. Alternatively, it has also been shown that rather than forming filaments, a single NHEJ1 dimer interacts through both head domains with XRCC4 to promote the close alignment of DNA ends. The XRCC4-NHEJ1/XLF subcomplex binds to the DNA fragments of a DSB in a highly diffusive manner and robustly bridges two independent DNA molecules, holding the broken DNA fragments in close proximity to one other. The mobility of the bridges ensures that the ends remain accessible for further processing by other repair factors. Binds DNA in a length-dependent manner. This chain is Non-homologous end-joining factor 1, found in Homo sapiens (Human).